The chain runs to 246 residues: Heavy metal-associated isoprenylated plant protein 8 (246 aa).

Residues 1–31 are disordered; it reads MGKNKQNGESDNKSEKKNQKNGDSSVDKSDK. The HMA 1 domain maps to 35-99; it reads CKEIVLKVYM…RVQKKFSRNA (65 aa). A metal cation is bound by residues Cys-46 and Cys-49. The tract at residues 96–122 is disordered; it reads SRNAEMISPKHNPKQDQKEPQQKKESA. The span at 108–122 shows a compositional bias: basic and acidic residues; the sequence is PKQDQKEPQQKKESA. The region spanning 125–189 is the HMA 2 domain; the sequence is IKTAILRMNM…IKKKLGKHAE (65 aa). A metal cation is bound by residues Cys-136 and Cys-139. Residues 191–226 form a disordered region; the sequence is LSQITEKGKDNNKKNNNKKEESDGNKIFSYPPQYSS. The segment covering 196 to 214 has biased composition (basic and acidic residues); that stretch reads EKGKDNNKKNNNKKEESDG. The residue at position 243 (Cys-243) is a Cysteine methyl ester. A lipid anchor (S-farnesyl cysteine) is attached at Cys-243. The propeptide at 244–246 is removed in mature form; it reads SIM.

The protein belongs to the HIPP family.

Functionally, heavy-metal-binding protein. The chain is Heavy metal-associated isoprenylated plant protein 8 from Arabidopsis thaliana (Mouse-ear cress).